Here is a 241-residue protein sequence, read N- to C-terminus: DnaJ homolog subfamily C member 4 (241 aa).

The J domain occupies Thr-34 to Leu-99. Residues Arg-88–Leu-99 are compositionally biased toward basic and acidic residues. A disordered region spans residues Arg-88–Ala-129. Over residues Gln-119–Ala-129 the composition is skewed to polar residues. Residues Val-156 to Phe-175 form a helical membrane-spanning segment. The segment at Gln-212 to Pro-241 is disordered.

Its subcellular location is the membrane. This chain is DnaJ homolog subfamily C member 4 (DNAJC4), found in Homo sapiens (Human).